The chain runs to 428 residues: Phosphomethylpyrimidine synthase (428 aa).

Substrate contacts are provided by residues asparagine 66, methionine 94, tyrosine 123, histidine 162, 184 to 186, 225 to 228, and glutamate 264; these read SRG and DALR. A Zn(2+)-binding site is contributed by histidine 268. Substrate is bound at residue tyrosine 291. Histidine 332 contributes to the Zn(2+) binding site. Residues cysteine 408, cysteine 411, and cysteine 415 each contribute to the [4Fe-4S] cluster site.

This sequence belongs to the ThiC family. It depends on [4Fe-4S] cluster as a cofactor.

The catalysed reaction is 5-amino-1-(5-phospho-beta-D-ribosyl)imidazole + S-adenosyl-L-methionine = 4-amino-2-methyl-5-(phosphooxymethyl)pyrimidine + CO + 5'-deoxyadenosine + formate + L-methionine + 3 H(+). Its pathway is cofactor biosynthesis; thiamine diphosphate biosynthesis. Its function is as follows. Catalyzes the synthesis of the hydroxymethylpyrimidine phosphate (HMP-P) moiety of thiamine from aminoimidazole ribotide (AIR) in a radical S-adenosyl-L-methionine (SAM)-dependent reaction. The polypeptide is Phosphomethylpyrimidine synthase (Sulfolobus acidocaldarius (strain ATCC 33909 / DSM 639 / JCM 8929 / NBRC 15157 / NCIMB 11770)).